The primary structure comprises 263 residues: Small ribosomal subunit protein uS15m (263 aa).

The N-terminal 70 residues, Met1–Lys70, are a transit peptide targeting the mitochondrion. The span at Glu238 to Lys251 shows a compositional bias: basic and acidic residues. Positions Glu238–Ala263 are disordered.

It belongs to the universal ribosomal protein uS15 family. As to quaternary structure, component of the mitochondrial ribosome small subunit (28S) which comprises a 12S rRNA and about 30 distinct proteins.

It localises to the mitochondrion. This is Small ribosomal subunit protein uS15m (mrps15) from Danio rerio (Zebrafish).